Reading from the N-terminus, the 471-residue chain is MSIQIFNTLTREKEPFKPLKDGEVKMYVCGPTVYNYIHIGNARPIIVFDTVRRYFTYRGYDVKFVSNFTDVDDKLIRAANELKLTVPEVADRFIGAYFDDVDQLNVAKASVNPRVTENMDEIIQLISTLIEKGYAYESAGDVYFRTKKFKDYGKLSGQELSELQHGARVEYNERKQDELDFTLWKAAKPDEIFWESPFGNGRPGWHIECSALAKKYLGDTIDIHAGGQDLVFPHHEDEIAQSEAATGKTFANYWMHNAFLNIDGEKMSKSLGNFITLHDVLKDNDPNVIRFFMLSVHYRKPITLNDAILEDAKNGLERLMIAYQNIDHRIQTDDGEYVEEAHEDEWLEQLTELKQAFEDDMDDDFNTANAITTFHELAKRANIYLAKETVSINVLREFLSMMRLFAEVLGLKLENTQTDSLDDSEVEALIEERLQARNERNFARADEIRDILKEKNIILEDTAQGTRFRRG.

A Zn(2+)-binding site is contributed by C29. The 'HIGH' region motif lies at 31-41 (PTVYNYIHIGN). C209, H234, and E238 together coordinate Zn(2+). Positions 266–270 (KMSKS) match the 'KMSKS' region motif. K269 is a binding site for ATP.

It belongs to the class-I aminoacyl-tRNA synthetase family. As to quaternary structure, monomer. The cofactor is Zn(2+).

It is found in the cytoplasm. The enzyme catalyses tRNA(Cys) + L-cysteine + ATP = L-cysteinyl-tRNA(Cys) + AMP + diphosphate. The chain is Cysteine--tRNA ligase from Listeria welshimeri serovar 6b (strain ATCC 35897 / DSM 20650 / CCUG 15529 / CIP 8149 / NCTC 11857 / SLCC 5334 / V8).